The following is a 389-amino-acid chain: Chalcone synthase 1 (389 aa).

The active site involves Cys164.

Belongs to the thiolase-like superfamily. Chalcone/stilbene synthases family.

The catalysed reaction is (E)-4-coumaroyl-CoA + 3 malonyl-CoA + 3 H(+) = 2',4,4',6'-tetrahydroxychalcone + 3 CO2 + 4 CoA. It functions in the pathway secondary metabolite biosynthesis; flavonoid biosynthesis. Functionally, the primary product of this enzyme is 4,2',4',6'-tetrahydroxychalcone (also termed naringenin-chalcone or chalcone) which can under specific conditions spontaneously isomerize into naringenin. The chain is Chalcone synthase 1 (CHS1) from Camellia sinensis (Tea plant).